The primary structure comprises 182 residues: Rhodanese-like domain-containing protein 15, chloroplastic (182 aa).

The transit peptide at 1-65 directs the protein to the chloroplast; the sequence is METTAFNTTS…TTSRGNVAAE (65 aa). A Rhodanese domain is found at 82 to 182; that stretch reads AQAGYRYLDV…WTENELPVEE (101 aa). The Cysteine persulfide intermediate role is filled by C142.

It is found in the plastid. It localises to the chloroplast. The protein localises to the thylakoid. The polypeptide is Rhodanese-like domain-containing protein 15, chloroplastic (STR15) (Arabidopsis thaliana (Mouse-ear cress)).